Here is a 425-residue protein sequence, read N- to C-terminus: Fe(2+) transport protein 3, chloroplastic (425 aa).

The helical transmembrane segment at 65–85 (FVAIASILLAGAAGVTIPLIG) threads the bilayer. Topologically, residues 86–97 (RNRRFLQTDGNL) are cytoplasmic. A helical transmembrane segment spans residues 98 to 118 (FVTAKAFAAGVILATGFVHML). Topologically, residues 119–137 (AGGTEALKNPCLPDFPWSK) are lumenal. Residues 138-158 (FPFPGFFAMIAALITLFVDFM) traverse the membrane as a helical segment. The Cytoplasmic segment spans residues 159-269 (GTQYYERKQE…GLDAVNGARH (111 aa)). The chain crosses the membrane as a helical span at residues 270-290 (IVVSQVLELGIVSHSIIIGLS). Residues 291–301 (LGVSQSPCTIR) lie on the Lumenal side of the membrane. A helical transmembrane segment spans residues 302–322 (PLIAALSFHQFFEGFALGGCI). The Cytoplasmic segment spans residues 323–333 (SQAQFRNKSAT). Residues 334-354 (IMACFFALTTPIGIGIGTAVA) form a helical membrane-spanning segment. The Lumenal portion of the chain corresponds to 355–369 (SSFNSHSVGALVTEG). A helical transmembrane segment spans residues 370 to 390 (ILDSLSAGILVYMALVDLIAA). Residues 391-404 (DFLSTKMRCNFRLQ) are Cytoplasmic-facing. The chain crosses the membrane as a helical span at residues 405–425 (IVSYVMLFLGAGLMSSLAIWA).

Belongs to the ZIP transporter (TC 2.A.5) family.

It is found in the plastid. It localises to the chloroplast thylakoid membrane. In terms of biological role, may play a role in the transport of iron in the plastids. This chain is Fe(2+) transport protein 3, chloroplastic (IRT3), found in Arabidopsis thaliana (Mouse-ear cress).